Here is a 166-residue protein sequence, read N- to C-terminus: Interleukin-3 (166 aa).

Positions methionine 1–glutamine 26 are cleaved as a signal peptide. Asparagine 42 carries N-linked (GlcNAc...) asparagine glycosylation. 2 cysteine pairs are disulfide-bonded: cysteine 43/cysteine 106 and cysteine 105/cysteine 166. Residue asparagine 112 is glycosylated (N-linked (GlcNAc...) asparagine; partial). The segment at leucine 145–cysteine 166 is disordered.

Belongs to the IL-3 family. Monomer. In terms of tissue distribution, activated T-cells, mast cells, natural killer cells.

Its subcellular location is the secreted. In terms of biological role, cytokine secreted predominantly by activated T-lymphocytes as well as mast cells and osteoblastic cells that controls the production and differentiation of hematopoietic progenitor cells into lineage-restricted cells. Also stimulates mature basophils, eosinophils, and monocytes to become functionally activated. In addition, plays an important role in neural cell proliferation and survival. Participates as well in bone homeostasis and inhibits osteoclast differentiation by preventing NF-kappa-B nuclear translocation and activation. Mechanistically, exerts its biological effects through a receptor composed of IL3RA subunit and a signal transducing subunit IL3RB. Receptor stimulation results in the rapid activation of JAK2 kinase activity leading to STAT5-mediated transcriptional program. Alternatively, contributes to cell survival under oxidative stress in non-hematopoietic systems by activating pathways mediated by PI3K/AKT and ERK. The protein is Interleukin-3 (Il3) of Mus musculus (Mouse).